Consider the following 85-residue polypeptide: Acyl carrier protein (85 aa).

The Carrier domain maps to 4–79 (DELFEKVKEI…NAVNLLSEKL (76 aa)). Ser39 carries the O-(pantetheine 4'-phosphoryl)serine modification.

This sequence belongs to the acyl carrier protein (ACP) family. Post-translationally, 4'-phosphopantetheine is transferred from CoA to a specific serine of apo-ACP by AcpS. This modification is essential for activity because fatty acids are bound in thioester linkage to the sulfhydryl of the prosthetic group.

It localises to the cytoplasm. It functions in the pathway lipid metabolism; fatty acid biosynthesis. Its function is as follows. Carrier of the growing fatty acid chain in fatty acid biosynthesis. The protein is Acyl carrier protein of Petrotoga mobilis (strain DSM 10674 / SJ95).